The sequence spans 434 residues: Histidinol dehydrogenase (434 aa).

Positions 130, 188, and 211 each coordinate NAD(+). 3 residues coordinate substrate: S237, Q259, and H262. Zn(2+)-binding residues include Q259 and H262. Residues E326 and H327 each act as proton acceptor in the active site. Substrate is bound by residues H327, D360, E414, and H419. D360 is a binding site for Zn(2+). Residue H419 coordinates Zn(2+).

It belongs to the histidinol dehydrogenase family. In terms of assembly, homodimer. The cofactor is Zn(2+).

It carries out the reaction L-histidinol + 2 NAD(+) + H2O = L-histidine + 2 NADH + 3 H(+). The protein operates within amino-acid biosynthesis; L-histidine biosynthesis; L-histidine from 5-phospho-alpha-D-ribose 1-diphosphate: step 9/9. Catalyzes the sequential NAD-dependent oxidations of L-histidinol to L-histidinaldehyde and then to L-histidine. The sequence is that of Histidinol dehydrogenase from Salmonella paratyphi A (strain ATCC 9150 / SARB42).